The primary structure comprises 330 residues: Beta-ketoacyl-[acyl-carrier-protein] synthase III (330 aa).

Catalysis depends on residues Cys-115 and His-255. Residues 256 to 260 (QANVR) are ACP-binding. Residue Asn-285 is part of the active site.

The protein belongs to the thiolase-like superfamily. FabH family. In terms of assembly, homodimer.

The protein resides in the cytoplasm. The enzyme catalyses malonyl-[ACP] + acetyl-CoA + H(+) = 3-oxobutanoyl-[ACP] + CO2 + CoA. Its pathway is lipid metabolism; fatty acid biosynthesis. Catalyzes the condensation reaction of fatty acid synthesis by the addition to an acyl acceptor of two carbons from malonyl-ACP. Catalyzes the first condensation reaction which initiates fatty acid synthesis and may therefore play a role in governing the total rate of fatty acid production. Possesses both acetoacetyl-ACP synthase and acetyl transacylase activities. Its substrate specificity determines the biosynthesis of branched-chain and/or straight-chain of fatty acids. The chain is Beta-ketoacyl-[acyl-carrier-protein] synthase III from Symbiobacterium thermophilum (strain DSM 24528 / JCM 14929 / IAM 14863 / T).